We begin with the raw amino-acid sequence, 342 residues long: Isopentenyl-diphosphate delta-isomerase (342 aa).

Residue 11-12 (RK) participates in substrate binding. Residues Ser-68, 69-71 (SMT), Ser-99, and Asn-127 contribute to the FMN site. 99 to 101 (SMR) is a binding site for substrate. Gln-162 contributes to the substrate binding site. Glu-163 is a binding site for Mg(2+). FMN-binding positions include Lys-194, Thr-224, 274–276 (GLK), and 295–296 (AG).

Belongs to the IPP isomerase type 2 family. Homooctamer. Dimer of tetramers. FMN is required as a cofactor. NADPH serves as cofactor. The cofactor is Mg(2+).

It localises to the cytoplasm. The enzyme catalyses isopentenyl diphosphate = dimethylallyl diphosphate. Involved in the biosynthesis of isoprenoids. Catalyzes the 1,3-allylic rearrangement of the homoallylic substrate isopentenyl (IPP) to its allylic isomer, dimethylallyl diphosphate (DMAPP). This is Isopentenyl-diphosphate delta-isomerase from Rickettsia akari (strain Hartford).